The following is a 486-amino-acid chain: LON peptidase N-terminal domain and RING finger protein C14F5.10c (486 aa).

The RING-type zinc finger occupies 169–207 (CQICFGMLYDPVVSPCGHTFCGPCLMQALTQSPQCPTCR). A Lon N-terminal domain is found at 250–472 (ESWLPLFISM…LVLIWLTQLQ (223 aa)).

This Schizosaccharomyces pombe (strain 972 / ATCC 24843) (Fission yeast) protein is LON peptidase N-terminal domain and RING finger protein C14F5.10c.